Reading from the N-terminus, the 265-residue chain is Aquaporin-5 (265 aa).

Residues 1–12 (MKKEVCSLAFLK) are Cytoplasmic-facing. A helical transmembrane segment spans residues 13–33 (AVFAEFLATLIFVFFGLASAL). Topologically, residues 34-39 (KWPSAL) are extracellular. A helical membrane pass occupies residues 40–60 (PTILQIALAFGLAIGTLAQAL). Over 61 to 65 (GPVSG) the chain is Cytoplasmic. The discontinuously helical intramembrane region spans 66–74 (GHINPAITL). Residues 69-71 (NPA) carry the NPA 1 motif. The Cytoplasmic segment spans residues 75–87 (ALLVGNQISLLRA). A helical membrane pass occupies residues 88–108 (VFYVVAQLVGAIAGAGILYGL). The Extracellular segment spans residues 109-126 (APGNARGNLAVNSLNNNT). N-linked (GlcNAc...) asparagine glycosylation is present at asparagine 124. The chain crosses the membrane as a helical span at residues 127 to 147 (TPGQAVVVEMILTFQLALCIF). At 148 to 158 (SSTDSRRTSPV) the chain is on the cytoplasmic side. A helical membrane pass occupies residues 159-179 (GSPALSIGLSVTLGHLVGIYF). Position 180 (threonine 180) is a topological domain, extracellular. An intramembrane region (discontinuously helical) is located at residues 181–191 (GCSMNPARSFG). The NPA 2 signature appears at 185-187 (NPA). The Extracellular segment spans residues 192–203 (PAVVMNRFSPSH). A helical transmembrane segment spans residues 204–224 (WVFWVGPIVGAAVAAILYFYL). The Cytoplasmic portion of the chain corresponds to 225-265 (LFPNSLSLSERVAVVKGTYESEEDWEEQREERKKTMELTAH).

Belongs to the MIP/aquaporin (TC 1.A.8) family. In terms of assembly, homotetramer; each monomer provides an independent water pore. Interacts with TRPV4; the interaction is probably indirect and regulates TRPV4 activation by hypotonicity.

It localises to the apical cell membrane. Its subcellular location is the cell membrane. The protein resides in the cytoplasmic vesicle membrane. It catalyses the reaction H2O(in) = H2O(out). Its function is as follows. Aquaporins form homotetrameric transmembrane channels, with each monomer independently mediating water transport across the plasma membrane along its osmotic gradient. Plays an important role in fluid secretion in salivary glands. Required for TRPV4 activation by hypotonicity. Together with TRPV4, controls regulatory volume decrease in salivary epithelial cells. Seems to play a redundant role in water transport in the eye, lung and in sweat glands. This chain is Aquaporin-5, found in Sus scrofa (Pig).